The sequence spans 92 residues: UPF0223 protein EF_2462 (92 aa).

Belongs to the UPF0223 family.

The chain is UPF0223 protein EF_2462 from Enterococcus faecalis (strain ATCC 700802 / V583).